A 134-amino-acid polypeptide reads, in one-letter code: Transcription antitermination protein NusB (134 aa).

It belongs to the NusB family.

Functionally, involved in transcription antitermination. Required for transcription of ribosomal RNA (rRNA) genes. Binds specifically to the boxA antiterminator sequence of the ribosomal RNA (rrn) operons. The protein is Transcription antitermination protein NusB of Shewanella woodyi (strain ATCC 51908 / MS32).